A 124-amino-acid polypeptide reads, in one-letter code: UPF0738 protein GWCH70_0774 (124 aa).

The protein belongs to the UPF0738 family.

The sequence is that of UPF0738 protein GWCH70_0774 from Geobacillus sp. (strain WCH70).